The chain runs to 466 residues: MRTQWVSARKGQANVSQMHYARKGVVTEEMAYVAKRENLPESLIMEEVARGRMIIPANINHTNLEPMAIGIASSCKVNANIGASPNASDAAEEVNKLKLAVKYGADTVMDLSTGGVNLDEVRTAIIGASPVPIGTVPVYQALESVHGSIEKLDEDDFLHIIEKHCQQGVDYQTIHAGLLIEHLPKVKGRITGIVSRGGGILAQWMLYHHRQNPLFTRFDDICEIFKRYDCTFSLGDSLRPGCQHDASDAAQLAELKTLGELTRRAWKHDVQVMVEGPGHVPLDQIEFNVKKQMEECNEAPFYVLGPLVTDIAPGYDHITSAIGAAMAGWHGTAMLCYVTPKEHLGLPNAEDVREGLIAYKIAAHAADIARHRPGARDRDDELSRARYAFDWNKQFELSLDPERAKEYHDETLPADIYKQAEFCSMCGPKHCPMQTKITDEDLEGLQKVLESQGAAELASVKLDKAE.

Substrate is bound by residues N80, M109, Y139, H175, 195-197, 236-239, and E275; these read SRG and DSLR. Residue H279 coordinates Zn(2+). Y302 contacts substrate. Residue H343 coordinates Zn(2+). Positions 423, 426, and 431 each coordinate [4Fe-4S] cluster.

The protein belongs to the ThiC family. The cofactor is [4Fe-4S] cluster.

The catalysed reaction is 5-amino-1-(5-phospho-beta-D-ribosyl)imidazole + S-adenosyl-L-methionine = 4-amino-2-methyl-5-(phosphooxymethyl)pyrimidine + CO + 5'-deoxyadenosine + formate + L-methionine + 3 H(+). The protein operates within cofactor biosynthesis; thiamine diphosphate biosynthesis. Functionally, catalyzes the synthesis of the hydroxymethylpyrimidine phosphate (HMP-P) moiety of thiamine from aminoimidazole ribotide (AIR) in a radical S-adenosyl-L-methionine (SAM)-dependent reaction. This is Phosphomethylpyrimidine synthase from Synechococcus sp. (strain CC9902).